A 652-amino-acid chain; its full sequence is Proline-rich receptor-like protein kinase PERK1 (652 aa).

The interval 1-137 (MSTAPSPGTT…PPSDSSDGLS (137 aa)) is disordered. At 1–139 (MSTAPSPGTT…SDSSDGLSTG (139 aa)) the chain is on the extracellular side. The segment covering 8 to 19 (GTTPSPSPPSPP) has biased composition (pro residues). N21 and N50 each carry an N-linked (GlcNAc...) asparagine glycan. Residues 26–112 (TPPPAASSPP…PSPNQGPPNT (87 aa)) are compositionally biased toward pro residues. Residues 113–137 (PSGSTPRTPSNTKPSPPSDSSDGLS) show a composition bias toward low complexity. A helical transmembrane segment spans residues 140–160 (VVVGIAIGGVAILVILTLICL). Over 161–652 (LCKKKRRRRH…TGQGYSGPSL (492 aa)) the chain is Cytoplasmic. Residues 169-251 (RHDDEAAYYV…GGSDYSDLPV (83 aa)) are disordered. Positions 203 to 213 (NASRPSDNHVV) are enriched in polar residues. Pro residues predominate over residues 216-236 (LPPPKPPSPPRKPPPPPPPPA). T269 bears the Phosphothreonine mark. In terms of domain architecture, Protein kinase spans 280 to 559 (FSEANLLGQG…VRALEGNVSL (280 aa)). ATP contacts are provided by residues 286–294 (LGQGGFGYV) and K308. Y353 carries the post-translational modification Phosphotyrosine. The active-site Proton acceptor is the D404. Phosphoserine is present on residues S408 and S437. Phosphothreonine occurs at positions 438 and 443. Y451 carries the phosphotyrosine modification. Positions 605–616 (YGTTGEYSNPTS) are enriched in polar residues. The segment at 605–652 (YGTTGEYSNPTSDYGLYPSGSSSEGQATREMEMGKIKKTGQGYSGPSL) is disordered.

Belongs to the protein kinase superfamily. Ser/Thr protein kinase family. As to expression, mostly expressed in inflorescence bolt, flower buds and siliques, and, to a lower extent, in roots, seedlings and leaves.

The protein localises to the cell membrane. The enzyme catalyses L-seryl-[protein] + ATP = O-phospho-L-seryl-[protein] + ADP + H(+). The catalysed reaction is L-threonyl-[protein] + ATP = O-phospho-L-threonyl-[protein] + ADP + H(+). This chain is Proline-rich receptor-like protein kinase PERK1 (PERK1), found in Arabidopsis thaliana (Mouse-ear cress).